We begin with the raw amino-acid sequence, 174 residues long: Crossover junction endodeoxyribonuclease RuvC (174 aa).

Residues D8, E67, and D139 contribute to the active site. Mg(2+)-binding residues include D8, E67, and D139.

The protein belongs to the RuvC family. Homodimer which binds Holliday junction (HJ) DNA. The HJ becomes 2-fold symmetrical on binding to RuvC with unstacked arms; it has a different conformation from HJ DNA in complex with RuvA. In the full resolvosome a probable DNA-RuvA(4)-RuvB(12)-RuvC(2) complex forms which resolves the HJ. Requires Mg(2+) as cofactor.

The protein localises to the cytoplasm. It catalyses the reaction Endonucleolytic cleavage at a junction such as a reciprocal single-stranded crossover between two homologous DNA duplexes (Holliday junction).. Its function is as follows. The RuvA-RuvB-RuvC complex processes Holliday junction (HJ) DNA during genetic recombination and DNA repair. Endonuclease that resolves HJ intermediates. Cleaves cruciform DNA by making single-stranded nicks across the HJ at symmetrical positions within the homologous arms, yielding a 5'-phosphate and a 3'-hydroxyl group; requires a central core of homology in the junction. The consensus cleavage sequence is 5'-(A/T)TT(C/G)-3'. Cleavage occurs on the 3'-side of the TT dinucleotide at the point of strand exchange. HJ branch migration catalyzed by RuvA-RuvB allows RuvC to scan DNA until it finds its consensus sequence, where it cleaves and resolves the cruciform DNA. The sequence is that of Crossover junction endodeoxyribonuclease RuvC from Pseudomonas syringae pv. syringae (strain B728a).